We begin with the raw amino-acid sequence, 157 residues long: Small ribosomal subunit protein uS7 (157 aa).

The protein belongs to the universal ribosomal protein uS7 family. As to quaternary structure, part of the 30S ribosomal subunit. Contacts proteins S9 and S11.

One of the primary rRNA binding proteins, it binds directly to 16S rRNA where it nucleates assembly of the head domain of the 30S subunit. Is located at the subunit interface close to the decoding center, probably blocks exit of the E-site tRNA. The chain is Small ribosomal subunit protein uS7 from Variovorax paradoxus (strain S110).